The following is a 340-amino-acid chain: Methionine import ATP-binding protein MetN 2 (340 aa).

An ABC transporter domain is found at 5 to 244 (VRFESVTKTF…PQAPASKSFV (240 aa)). Position 41–48 (41–48 (GYSGAGKS)) interacts with ATP.

This sequence belongs to the ABC transporter superfamily. Methionine importer (TC 3.A.1.24) family. As to quaternary structure, the complex is composed of two ATP-binding proteins (MetN), two transmembrane proteins (MetI) and a solute-binding protein (MetQ).

Its subcellular location is the cell membrane. The enzyme catalyses L-methionine(out) + ATP + H2O = L-methionine(in) + ADP + phosphate + H(+). It carries out the reaction D-methionine(out) + ATP + H2O = D-methionine(in) + ADP + phosphate + H(+). Functionally, part of the ABC transporter complex MetNIQ involved in methionine import. Responsible for energy coupling to the transport system. In Rhodococcus jostii (strain RHA1), this protein is Methionine import ATP-binding protein MetN 2.